The primary structure comprises 256 residues: tRNA (guanine-N(7)-)-methyltransferase (256 aa).

Residues Glu85, Glu110, Asp137, and Asp159 each contribute to the S-adenosyl-L-methionine site. Asp159 is a catalytic residue. Lys163 and Asp195 together coordinate substrate.

The protein belongs to the class I-like SAM-binding methyltransferase superfamily. TrmB family.

It carries out the reaction guanosine(46) in tRNA + S-adenosyl-L-methionine = N(7)-methylguanosine(46) in tRNA + S-adenosyl-L-homocysteine. Its pathway is tRNA modification; N(7)-methylguanine-tRNA biosynthesis. In terms of biological role, catalyzes the formation of N(7)-methylguanine at position 46 (m7G46) in tRNA. In Rhodopseudomonas palustris (strain HaA2), this protein is tRNA (guanine-N(7)-)-methyltransferase.